The chain runs to 285 residues: uncharacterized protein (285 aa).

The first 25 residues, 1 to 25, serve as a signal peptide directing secretion; it reads MVKKWLIQFAVMLSVLSTFTYSASA.

This is an uncharacterized protein from Bacillus subtilis (strain 168).